A 173-amino-acid polypeptide reads, in one-letter code: Large ribosomal subunit protein uL22c (173 aa).

This sequence belongs to the universal ribosomal protein uL22 family. Part of the 50S ribosomal subunit.

The protein resides in the plastid. Its subcellular location is the chloroplast. In terms of biological role, this protein binds specifically to 23S rRNA. The globular domain of the protein is located near the polypeptide exit tunnel on the outside of the subunit, while an extended beta-hairpin is found that lines the wall of the exit tunnel in the center of the 70S ribosome. This chain is Large ribosomal subunit protein uL22c (rpl22), found in Drimys granadensis.